We begin with the raw amino-acid sequence, 2547 residues long: Lovastatin diketide synthase mokB (2547 aa).

In terms of domain architecture, Ketosynthase family 3 (KS3) spans 10-430; the sequence is PTPIAVVGMG…GANAHAIVER (421 aa). Catalysis depends on for beta-ketoacyl synthase activity residues C183, H318, and H353. An acyl and malonyl transferase region spans residues 545-890; it reads VFTGQGAQWF…MDLLQGGYPV (346 aa). The active-site For malonyltransferase activity is S635. An N-terminal hotdog fold region spans residues 941 to 1079; sequence HDLIGVQEPL…GLIRAQVDHP (139 aa). A PKS/mFAS DH domain is found at 941-1252; the sequence is HDLIGVQEPL…FQSLGAVISD (312 aa). H973 (proton acceptor; for dehydratase activity) is an active-site residue. The dehydratase-like stretch occupies residues 973–985; sequence HVVGSRILFPGAG. The segment at 1095–1252 is C-terminal hotdog fold; sequence SRKMAPQDLW…FQSLGAVISD (158 aa). Catalysis depends on D1160, which acts as the Proton donor; for dehydratase activity. C1340 and C1379 form a disulfide bridge. The segment at 1510 to 1547 is methyltransferase; sequence YDVVLACQVLHATSNMQRTLNNVRKLLKPGGKLILVET. Positions 2459-2541 constitute a Carrier domain; that stretch reads ASTEEEATAL…EVAEVVVKKY (83 aa). S2501 is subject to O-(pantetheine 4'-phosphoryl)serine.

Requires pantetheine 4'-phosphate as cofactor.

The enzyme catalyses holo-[2-methylbutanoate polyketide synthase] + 2 malonyl-CoA + S-adenosyl-L-methionine + 2 NADPH + 3 H(+) = (S)-2-methylbutanoyl-[2-methylbutanoate polyketide synthase] + S-adenosyl-L-homocysteine + 2 CO2 + 2 NADP(+) + 2 CoA + H2O. It functions in the pathway polyketide biosynthesis; lovastatin biosynthesis. Functionally, diketide synthase; part of the gene cluster that mediates the biosynthesis of monakolin K, also known as lovastatin, and which acts as a potent competitive inhibitor of HMG-CoA reductase. Monakolin K biosynthesis is performed in two stages. The first stage is catalyzed by the nonaketide synthase mokA, which belongs to type I polyketide synthases and catalyzes the iterative nine-step formation of the polyketide. This PKS stage completed by the action of dehydrogenase mokE, which catalyzes the NADPH-dependent reduction of the unsaturated tetra-, penta- and heptaketide intermediates that arise during the mokA-mediated biosynthesis of the nonaketide chain and leads to dihydromonacolin L. Covalently bound dihydromonacolin L is released from mokA by the mokD esterase. Conversion of dihydromonacolin L into monacolin L and then monacolin J is subsequently performed with the participation of molecular oxygen and P450 monoogygenase mokC. Finally, mokF performs the conversion of monacoline J to monacoline K through the addition of the side-chain diketide moiety (2R)-2-methylbutanoate produced by the diketide synthase mokB. This Monascus pilosus (Red mold) protein is Lovastatin diketide synthase mokB.